Reading from the N-terminus, the 253-residue chain is Ribosome maturation protein SBDS (253 aa).

Belongs to the SDO1/SBDS family. Associates with the 60S ribosomal subunit.

The protein localises to the cytoplasm. Its subcellular location is the nucleus. It is found in the nucleolus. It localises to the nucleoplasm. The protein resides in the cytoskeleton. The protein localises to the spindle. Functionally, required for the assembly of mature ribosomes and ribosome biogenesis. Together with K10C3.5b/EFL1, triggers the GTP-dependent release of ribosome maturation factors from 60S pre-ribosomes in the cytoplasm, thereby activating ribosomes for translation competence by allowing 80S ribosome assembly. Required for normal levels of protein synthesis. May play a role in cellular stress resistance. May play a role in cellular response to DNA damage. May play a role in cell proliferation. This Caenorhabditis elegans protein is Ribosome maturation protein SBDS (sbds-1).